Reading from the N-terminus, the 187-residue chain is GTP cyclohydrolase 1 (187 aa).

C74, H77, and C145 together coordinate Zn(2+).

The protein belongs to the GTP cyclohydrolase I family. As to quaternary structure, homomer.

It catalyses the reaction GTP + H2O = 7,8-dihydroneopterin 3'-triphosphate + formate + H(+). The protein operates within cofactor biosynthesis; 7,8-dihydroneopterin triphosphate biosynthesis; 7,8-dihydroneopterin triphosphate from GTP: step 1/1. This chain is GTP cyclohydrolase 1, found in Sulfurihydrogenibium sp. (strain YO3AOP1).